A 795-amino-acid polypeptide reads, in one-letter code: Protocadherin beta-4 (795 aa).

An N-terminal signal peptide occupies residues 1–27 (MKKLGRIHPNRQVLAFILMVFLSQVRL). The Extracellular segment spans residues 28–689 (EPIRYSVLEE…SQADSLTVYL (662 aa)). Cadherin domains are found at residues 34 to 132 (VLEE…SPVF), 137 to 241 (VLLK…APEF), 246 to 346 (YGVQ…PPEL), 351 to 450 (LTSS…APAF), and 455 to 560 (YTLF…SPFV). An N-linked (GlcNAc...) asparagine glycan is attached at asparagine 183. N-linked (GlcNAc...) asparagine glycosylation is present at asparagine 417. Asparagine 566 is a glycosylation site (N-linked (GlcNAc...) asparagine). Residues 567–670 (GSAPCTELVP…LVDGFSQPYL (104 aa)) enclose the Cadherin 6 domain. A helical membrane pass occupies residues 690–710 (VVALASVSSLFLFSVLLFVAV). At 711 to 795 (RLCRRSRAAS…PKFRNSLVFS (85 aa)) the chain is on the cytoplasmic side.

It localises to the cell membrane. In terms of biological role, potential calcium-dependent cell-adhesion protein. May be involved in the establishment and maintenance of specific neuronal connections in the brain. The sequence is that of Protocadherin beta-4 (PCDHB4) from Pan troglodytes (Chimpanzee).